Here is a 144-residue protein sequence, read N- to C-terminus: Large ribosomal subunit protein uL16 (144 aa).

It belongs to the universal ribosomal protein uL16 family. As to quaternary structure, part of the 50S ribosomal subunit.

Functionally, binds 23S rRNA and is also seen to make contacts with the A and possibly P site tRNAs. This is Large ribosomal subunit protein uL16 from Heliobacterium modesticaldum (strain ATCC 51547 / Ice1).